Here is a 329-residue protein sequence, read N- to C-terminus: Ferredoxin--NADP reductase (329 aa).

Residues Asp28, Gln36, Tyr41, Ala81, Phe115, Asp282, and Thr323 each contribute to the FAD site.

Belongs to the ferredoxin--NADP reductase type 2 family. As to quaternary structure, homodimer. Requires FAD as cofactor.

It catalyses the reaction 2 reduced [2Fe-2S]-[ferredoxin] + NADP(+) + H(+) = 2 oxidized [2Fe-2S]-[ferredoxin] + NADPH. The polypeptide is Ferredoxin--NADP reductase (Anaplasma marginale (strain St. Maries)).